The chain runs to 548 residues: Nonribosomal peptide synthetase 8 (548 aa).

Residues 1–77 (MNSLDQWRDT…QLRGENRSGP (77 aa)) form the Carrier domain. The residue at position 35 (Ser35) is an O-(pantetheine 4'-phosphoryl)serine. The interval 122-537 (MAPISSIQEF…FKSLIAELAA (416 aa)) is condensation.

It belongs to the NRP synthetase family.

Its pathway is mycotoxin biosynthesis. Its function is as follows. Nonribosomal peptide synthetase; part of the gene cluster that mediates the biosynthesis of fumonisins B1 (FB1), B2 (FB2), B3 (FB3), and B4 (FB4), which are carcinogenic mycotoxins. Within the pathway FUM14 catalyzes esterification of CoA-activated tricarballylic acid to the C-14 and C-15 hydroxyls of the fumonisin backbone. The biosynthesis starts with the FUM1-catalyzed carbon chain assembly from one molecule of acetyl-CoA, eight molecules of malonyl-CoA, and two molecules of methionine (in S-adenosyl form). The C18 polyketide chain is released from the enzyme by a nucleophilic attack of a carbanion, which is derived from R-carbon of alanine by decarboxylation, on the carbonyl carbon of polyketide acyl chain. This step is catalyzed by the pyridoxal 5'-phosphate-dependent aminoacyl transferase FUM8. The resultant 3-keto intermediate is then stereospecifically reduced to a 3-hydroxyl product by reductase FUM13. Subsequent oxidations at C-10 by the cytochrome P450 monooxygenase FUM2, C-14 and C-15 by FUM6, FUM12 or FUM15, tricarballylic esterification of the hydroxyl groups on C-14 and C-15 by acyltransferase FUM14, and C-5 hydroxylation by 2-keto-glutarate-dependent dioxygenase FUM3 furnish the biosynthesis of fumonisins. The tricarballylic moieties are most likely derived from the citric acid cycle, and their addition to the carbon backbone may involve FUM7, FUM10, FUM11 and FUM14. The polypeptide is Nonribosomal peptide synthetase 8 (Gibberella moniliformis (strain M3125 / FGSC 7600) (Maize ear and stalk rot fungus)).